We begin with the raw amino-acid sequence, 261 residues long: uncharacterized protein (261 aa).

Residues 15 to 75 form the HTH tetR-type domain; sequence SINPEDIISG…AMTDRALSKY (61 aa). The segment at residues 38 to 57 is a DNA-binding region (H-T-H motif); that stretch reads SMPLLGKHLGVGVTSIYWYF. Positions 234-261 are disordered; sequence AAGEVAVRRPTATADAPTPGARAKAVAR. The span at 241 to 261 shows a compositional bias: low complexity; the sequence is RRPTATADAPTPGARAKAVAR.

This is an uncharacterized protein from Mycobacterium bovis (strain ATCC BAA-935 / AF2122/97).